A 294-amino-acid chain; its full sequence is Probable aspartoacylase (294 aa).

Zn(2+)-binding residues include histidine 14 and glutamate 17. Residues arginine 56 and 63–64 (NR) contribute to the substrate site. Zn(2+) is bound at residue histidine 106. Residues glutamate 164 and tyrosine 275 each contribute to the substrate site.

It belongs to the AspA/AstE family. Aspartoacylase subfamily. The cofactor is Zn(2+).

The enzyme catalyses an N-acyl-L-aspartate + H2O = a carboxylate + L-aspartate. This chain is Probable aspartoacylase, found in Nostoc sp. (strain PCC 7120 / SAG 25.82 / UTEX 2576).